The sequence spans 197 residues: ATP-dependent Clp protease proteolytic subunit (197 aa).

Ser-98 serves as the catalytic Nucleophile. The active site involves His-123.

Belongs to the peptidase S14 family. As to quaternary structure, fourteen ClpP subunits assemble into 2 heptameric rings which stack back to back to give a disk-like structure with a central cavity, resembling the structure of eukaryotic proteasomes. Forms large heterooligomeric complexes consisting of an ATPase component (ClpX, ClpC or ClpE) and a proteolytic component (ClpP).

It is found in the cytoplasm. It carries out the reaction Hydrolysis of proteins to small peptides in the presence of ATP and magnesium. alpha-casein is the usual test substrate. In the absence of ATP, only oligopeptides shorter than five residues are hydrolyzed (such as succinyl-Leu-Tyr-|-NHMec, and Leu-Tyr-Leu-|-Tyr-Trp, in which cleavage of the -Tyr-|-Leu- and -Tyr-|-Trp bonds also occurs).. Its activity is regulated as follows. Low intrinsic peptidase activity is stimulated by ATP-binding subunits ClpC, ClpE and ClpX. Activity is disregulated by acyldepsipeptides (ADEP) antibiotics, which negate the need for ATP-binding subunits for activation and which makes it into an unregulated protease. Each ClpP subunit binds 1 ADEP molecule, which prevents binding of ClpX. ADEP binding causes conformational shifts that open the gated pore of the ring. Protease activity is inhibited by diisopropylfluoro-phosphate. Protease activity is inhibited by bortezomib, an oncology drug originally designed to work on the human proteasome. Its function is as follows. Cleaves peptides in various proteins in a process that requires ATP hydrolysis. Has a limited peptidase activity in the absence of ATP-binding subunits ClpC, ClpE or ClpX. Has a chymotrypsin-like activity. Plays a major role in the degradation of misfolded proteins. ClpXP is involved in the complete degradation of the site-2 clipped anti-sigma-W factor RsiW. This results in the release of SigW and the transcriptional activation of genes under the control of the sigma-W factor. Probably the major protease that degrades proteins tagged by trans-translation. This Bacillus subtilis (strain 168) protein is ATP-dependent Clp protease proteolytic subunit.